Reading from the N-terminus, the 283-residue chain is Bifunctional protein FolD 1 (283 aa).

Residues 166–168 (GRS) and isoleucine 232 contribute to the NADP(+) site.

It belongs to the tetrahydrofolate dehydrogenase/cyclohydrolase family. As to quaternary structure, homodimer.

It catalyses the reaction (6R)-5,10-methylene-5,6,7,8-tetrahydrofolate + NADP(+) = (6R)-5,10-methenyltetrahydrofolate + NADPH. It carries out the reaction (6R)-5,10-methenyltetrahydrofolate + H2O = (6R)-10-formyltetrahydrofolate + H(+). It participates in one-carbon metabolism; tetrahydrofolate interconversion. Catalyzes the oxidation of 5,10-methylenetetrahydrofolate to 5,10-methenyltetrahydrofolate and then the hydrolysis of 5,10-methenyltetrahydrofolate to 10-formyltetrahydrofolate. In Lactobacillus johnsonii (strain CNCM I-12250 / La1 / NCC 533), this protein is Bifunctional protein FolD 1.